We begin with the raw amino-acid sequence, 114 residues long: uncharacterized protein (114 aa).

The chain crosses the membrane as a helical span at residues 7–27 (YIFSFWFFFLVEYVVTFRLFL). The tract at residues 90–114 (KNSPEKKKFKRGLPISSKYTDGKKR) is disordered.

It localises to the membrane. This is an uncharacterized protein from Saccharomyces cerevisiae (strain ATCC 204508 / S288c) (Baker's yeast).